Reading from the N-terminus, the 162-residue chain is 2-C-methyl-D-erythritol 2,4-cyclodiphosphate synthase (162 aa).

2 residues coordinate a divalent metal cation: Asp12 and His14. 4-CDP-2-C-methyl-D-erythritol 2-phosphate-binding positions include 12-14 (DVH) and 38-39 (HS). An a divalent metal cation-binding site is contributed by His46. 4-CDP-2-C-methyl-D-erythritol 2-phosphate-binding positions include 60-62 (DIG), 65-69 (FPDTD), and Arg146.

It belongs to the IspF family. Homotrimer. The cofactor is a divalent metal cation.

It carries out the reaction 4-CDP-2-C-methyl-D-erythritol 2-phosphate = 2-C-methyl-D-erythritol 2,4-cyclic diphosphate + CMP. Its pathway is isoprenoid biosynthesis; isopentenyl diphosphate biosynthesis via DXP pathway; isopentenyl diphosphate from 1-deoxy-D-xylulose 5-phosphate: step 4/6. Involved in the biosynthesis of isopentenyl diphosphate (IPP) and dimethylallyl diphosphate (DMAPP), two major building blocks of isoprenoid compounds. Catalyzes the conversion of 4-diphosphocytidyl-2-C-methyl-D-erythritol 2-phosphate (CDP-ME2P) to 2-C-methyl-D-erythritol 2,4-cyclodiphosphate (ME-CPP) with a corresponding release of cytidine 5-monophosphate (CMP). The polypeptide is 2-C-methyl-D-erythritol 2,4-cyclodiphosphate synthase (Bordetella petrii (strain ATCC BAA-461 / DSM 12804 / CCUG 43448)).